The sequence spans 146 residues: MGGTTDFVLSITIVLVILIIIAFIWYNFTGWSPFKYSKGNTVTFKTPDESSIAYMRFKNCVFTFTDPKGSLHSVDVTNVLNNMAKGFRDAQNPPSSFTLGGHCQAPLNAFSFILPGVNDRATVATADEAKKWENCDATLTGLQRII.

A helical transmembrane segment spans residues 7 to 27; it reads FVLSITIVLVILIIIAFIWYN.

Belongs to the asfivirus E146L family.

It is found in the host membrane. Its subcellular location is the virion. This is an uncharacterized protein from Ornithodoros (relapsing fever ticks).